Here is a 441-residue protein sequence, read N- to C-terminus: MDRPAGLRLRPREVACIVKPNERYVVAGGCRLQGEVPVSGAKNAALPILAAALLTSGESVIHNAPMIRDVAVMIEILHKLGARVEEGPEGVSGRTLRIRADGLNGQEVGADFTREMRSSIFLMGPLLARVGKIRISYPGGCAIGPRPIDFHLRGLEALGARIEERFGYIEASVPRRLRGTEIYLDFPSVGATENLMMAAVLAEGTTVIRNAAREPEIVDLQAFLNKMGARVRGAGLDVIRIDGVSKLGSVEHTVIPDRIEAATFLAAAAITGGEVTVQGVIPEHVDAVTAKLREMGTTIREYGTAVTAVGPRRLKAADVKTLPYPGFPTDMQPQMMALAATADGTSIITETIFENRFKVADELRRMGANIKTEGRTAVVQGVPSLSGATVVCPALREGMALILAGLRAEGETTIEDIYHIDRGYQHLEQKLTRLGATISRV.

42–43 contributes to the phosphoenolpyruvate binding site; that stretch reads KN. Arginine 117 provides a ligand contact to UDP-N-acetyl-alpha-D-glucosamine. Cysteine 141 functions as the Proton donor in the catalytic mechanism. Cysteine 141 is modified (2-(S-cysteinyl)pyruvic acid O-phosphothioketal). Positions 330 and 352 each coordinate UDP-N-acetyl-alpha-D-glucosamine.

The protein belongs to the EPSP synthase family. MurA subfamily.

It is found in the cytoplasm. The enzyme catalyses phosphoenolpyruvate + UDP-N-acetyl-alpha-D-glucosamine = UDP-N-acetyl-3-O-(1-carboxyvinyl)-alpha-D-glucosamine + phosphate. It participates in cell wall biogenesis; peptidoglycan biosynthesis. Its function is as follows. Cell wall formation. Adds enolpyruvyl to UDP-N-acetylglucosamine. The polypeptide is UDP-N-acetylglucosamine 1-carboxyvinyltransferase 1 (Symbiobacterium thermophilum (strain DSM 24528 / JCM 14929 / IAM 14863 / T)).